Reading from the N-terminus, the 96-residue chain is uncharacterized protein (96 aa).

The protein localises to the mitochondrion. This is an uncharacterized protein from Schizosaccharomyces pombe (strain 972 / ATCC 24843) (Fission yeast).